The sequence spans 286 residues: 33 kDa chaperonin (286 aa).

Disulfide bonds link Cys233/Cys235 and Cys267/Cys270.

Belongs to the HSP33 family. Post-translationally, under oxidizing conditions two disulfide bonds are formed involving the reactive cysteines. Under reducing conditions zinc is bound to the reactive cysteines and the protein is inactive.

It is found in the cytoplasm. Functionally, redox regulated molecular chaperone. Protects both thermally unfolding and oxidatively damaged proteins from irreversible aggregation. Plays an important role in the bacterial defense system toward oxidative stress. In Histophilus somni (strain 2336) (Haemophilus somnus), this protein is 33 kDa chaperonin.